A 693-amino-acid polypeptide reads, in one-letter code: Transforming growth factor beta activator LRRC33 (693 aa).

The N-terminal stretch at methionine 1–tryptophan 19 is a signal peptide. The Extracellular portion of the chain corresponds to arginine 20 to leucine 651. In terms of domain architecture, LRRNT spans alanine 29–proline 56. LRR repeat units lie at residues histidine 58–alanine 79, arginine 82–glutamate 103, histidine 106–alanine 127, glycine 133–asparagine 155, serine 158–glycine 179, histidine 182–glycine 203, glutamate 206–glutamine 227, leucine 228–glutamate 239, glutamate 251–glycine 272, and lysine 273–serine 294. Asparagine 74 and asparagine 85 each carry an N-linked (GlcNAc...) asparagine glycan. The N-linked (GlcNAc...) asparagine glycan is linked to asparagine 155. N-linked (GlcNAc...) asparagine glycosylation is present at asparagine 232. N-linked (GlcNAc...) asparagine glycosylation is found at asparagine 292, asparagine 309, and asparagine 312. LRR repeat units lie at residues alanine 329 to lysine 350, serine 353 to proline 374, alanine 377 to threonine 398, asparagine 403 to asparagine 424, serine 427 to aspartate 448, serine 463 to glycine 484, serine 486 to tryptophan 507, threonine 512 to serine 533, asparagine 537 to leucine 558, alanine 559 to glutamate 580, and glycine 585 to glycine 605. Residues asparagine 408 and asparagine 424 are each glycosylated (N-linked (GlcNAc...) asparagine). A glycan (N-linked (GlcNAc...) asparagine) is linked at asparagine 500. Residues alanine 606–tryptophan 644 enclose the LRRCT domain. Asparagine 623 carries N-linked (GlcNAc...) asparagine glycosylation. The chain crosses the membrane as a helical span at residues phenylalanine 652–phenylalanine 672. The Cytoplasmic segment spans residues leucine 673 to tyrosine 693.

This sequence belongs to the LRRC32/LRRC33 family. In terms of assembly, interacts with TGFB1; associates via disulfide bonds with the Latency-associated peptide chain (LAP) regulatory chain of TGFB1, leading to regulate activation of TGF-beta-1. Interacts (via LRR repeats) with TLR2, TLR3, TLR4, TLR9 and probably other Toll-like receptors. Interacts with CYBB/NOX2; the interaction is direct. Post-translationally, N-glycosylated. Mainly expressed in cells of hematopoietic origin, such as in immune organs such as lymph nodes, thymus and spleen. Among leukocytes, expressed at higher level in myeloid cell such as macrophages, neutrophils and dendritic cells. Highly expressed in central nervous system-resident macrophages, including microglia and perivascular macrophages.

The protein localises to the cell membrane. It is found in the endoplasmic reticulum membrane. In terms of biological role, key regulator of transforming growth factor beta-1 (TGFB1) specifically required for microglia function in the nervous system. Required for activation of latent TGF-beta-1 in macrophages and microglia: associates specifically via disulfide bonds with the Latency-associated peptide (LAP), which is the regulatory chain of TGFB1, and regulates integrin-dependent activation of TGF-beta-1. TGF-beta-1 activation mediated by LRRC33/NRROS is highly localized: there is little spreading of TGF-beta-1 activated from one microglial cell to neighboring microglia, suggesting the existence of localized and selective activation of TGF-beta-1 by LRRC33/NRROS. Indirectly plays a role in Toll-like receptor (TLR) signaling: ability to inhibit TLR-mediated NF-kappa-B activation and cytokine production is probably a consequence of its role in TGF-beta-1 signaling. This is Transforming growth factor beta activator LRRC33 from Mus musculus (Mouse).